A 420-amino-acid chain; its full sequence is Serine--tRNA ligase (420 aa).

227–229 (TSE) contributes to the L-serine binding site. Residues 258-260 (RRE) and Val-274 contribute to the ATP site. Glu-281 serves as a coordination point for L-serine. 345–348 (EVTS) lines the ATP pocket. Thr-379 contributes to the L-serine binding site.

Belongs to the class-II aminoacyl-tRNA synthetase family. Type-1 seryl-tRNA synthetase subfamily. Homodimer. The tRNA molecule binds across the dimer.

The protein localises to the cytoplasm. The catalysed reaction is tRNA(Ser) + L-serine + ATP = L-seryl-tRNA(Ser) + AMP + diphosphate + H(+). It carries out the reaction tRNA(Sec) + L-serine + ATP = L-seryl-tRNA(Sec) + AMP + diphosphate + H(+). It functions in the pathway aminoacyl-tRNA biosynthesis; selenocysteinyl-tRNA(Sec) biosynthesis; L-seryl-tRNA(Sec) from L-serine and tRNA(Sec): step 1/1. In terms of biological role, catalyzes the attachment of serine to tRNA(Ser). Is also able to aminoacylate tRNA(Sec) with serine, to form the misacylated tRNA L-seryl-tRNA(Sec), which will be further converted into selenocysteinyl-tRNA(Sec). The chain is Serine--tRNA ligase from Acidothermus cellulolyticus (strain ATCC 43068 / DSM 8971 / 11B).